Here is a 186-residue protein sequence, read N- to C-terminus: UPF0397 protein lp_0150 (186 aa).

The next 5 membrane-spanning stretches (helical) occupy residues 12 to 32 (VVAT…VAIP), 45 to 65 (GFLA…AVFI), 76 to 96 (GSPW…FGLA), 112 to 132 (LVWF…LLAP), and 151 to 171 (VITW…LLVL).

It belongs to the UPF0397 family.

The protein localises to the cell membrane. In Lactiplantibacillus plantarum (strain ATCC BAA-793 / NCIMB 8826 / WCFS1) (Lactobacillus plantarum), this protein is UPF0397 protein lp_0150.